The primary structure comprises 638 residues: 1-deoxy-D-xylulose-5-phosphate synthase (638 aa).

Residues H72 and 113 to 115 (GHA) each bind thiamine diphosphate. Residue D144 participates in Mg(2+) binding. Residues 145-146 (GA), N174, Y287, and E370 contribute to the thiamine diphosphate site. N174 is a binding site for Mg(2+).

The protein belongs to the transketolase family. DXPS subfamily. Homodimer. The cofactor is Mg(2+). Thiamine diphosphate is required as a cofactor.

The enzyme catalyses D-glyceraldehyde 3-phosphate + pyruvate + H(+) = 1-deoxy-D-xylulose 5-phosphate + CO2. It participates in metabolic intermediate biosynthesis; 1-deoxy-D-xylulose 5-phosphate biosynthesis; 1-deoxy-D-xylulose 5-phosphate from D-glyceraldehyde 3-phosphate and pyruvate: step 1/1. Its function is as follows. Catalyzes the acyloin condensation reaction between C atoms 2 and 3 of pyruvate and glyceraldehyde 3-phosphate to yield 1-deoxy-D-xylulose-5-phosphate (DXP). The chain is 1-deoxy-D-xylulose-5-phosphate synthase from Thermosynechococcus vestitus (strain NIES-2133 / IAM M-273 / BP-1).